Reading from the N-terminus, the 429-residue chain is MAQTPPPESAPSTDSEPETALETARRQLQAAAEHVDIADGVIERLTHPTRVVQVSVPVERDDGTVTVYDGYRAQHDDVRGPYKGGLRYHPGVSAEECVGLSMWMTWKCAVMDLPFGGAKGGVVVDPKTLSADEHERLTRRFAAELRDEVGPSQDIPAPDMGTDAQTMAWFMDAYSMQQGETVPGVVTGKPPVAGGSHGRAEAPGRSVAIATREAINYYDIPIDDATVAVQGYGSVGANAALLLDDWGARVVAVSDVNGGVLDTDGLDTHAIPSHGNQPAAVMRHDAPNTLTNEELLELDVDVVIPAAVGNVITAANADRIQADIVVEGANGPTTSAADRILEERAVPVIPDILANAGGVTVSYFEWLQDINRRTWSPERVRDELESEMLSAWNAVRSEVDDGDLSWRDAAYVVALQRIGRAKEARGLWP.

Residues 1-20 (MAQTPPPESAPSTDSEPETA) are disordered. Lysine 119 is an active-site residue.

This sequence belongs to the Glu/Leu/Phe/Val dehydrogenases family. Homohexamer.

The sequence is that of Glutamate dehydrogenase B (gdhB) from Halobacterium salinarum (strain ATCC 700922 / JCM 11081 / NRC-1) (Halobacterium halobium).